Reading from the N-terminus, the 411-residue chain is Elongation factor 1-gamma (411 aa).

In terms of domain architecture, GST N-terminal spans 3–84 (LTLWSGVNPE…HIARLDRSGG (82 aa)). Residues 90 to 216 (TPLEGSQVDM…QGATFGAREG (127 aa)) form the GST C-terminal domain. The tract at residues 212–265 (GAREGGAKGQGRGCARPGREEAERAAAAADGAEEEDEAPREKKKPNPLDELPPS) is disordered. Over residues 214–223 (REGGAKGQGR) the composition is skewed to gly residues. Positions 255–411 (KPNPLDELPP…RPVLEGRVFK (157 aa)) constitute an EF-1-gamma C-terminal domain.

EF-1 is composed of four subunits: alpha, beta, delta, and gamma.

Functionally, probably plays a role in anchoring the complex to other cellular components. The sequence is that of Elongation factor 1-gamma from Trypanosoma cruzi.